Reading from the N-terminus, the 687-residue chain is Glycine--tRNA ligase beta subunit (687 aa).

The protein belongs to the class-II aminoacyl-tRNA synthetase family. Tetramer of two alpha and two beta subunits.

The protein localises to the cytoplasm. The enzyme catalyses tRNA(Gly) + glycine + ATP = glycyl-tRNA(Gly) + AMP + diphosphate. The chain is Glycine--tRNA ligase beta subunit from Neisseria gonorrhoeae (strain ATCC 700825 / FA 1090).